We begin with the raw amino-acid sequence, 348 residues long: LRP2-binding protein (348 aa).

A TPR repeat occupies threonine 60–alanine 93. 6 Sel1-like repeats span residues threonine 94–cysteine 126, phenylalanine 134–asparagine 169, valine 174–asparagine 207, leucine 208–asparagine 243, valine 244–aspartate 278, and alanine 298–proline 333.

As to quaternary structure, interacts with LRP2.

It is found in the cytoplasm. May act as an adapter that regulates LRP2 function. This chain is LRP2-binding protein (LRP2BP), found in Macaca fascicularis (Crab-eating macaque).